We begin with the raw amino-acid sequence, 246 residues long: Alpha-amylase inhibitor 1 (246 aa).

A signal peptide spans 1–23; the sequence is MIMASSKLLSLALFLALLSHANS. N-linked (GlcNAc...) asparagine glycosylation is found at asparagine 35, asparagine 88, and asparagine 163. Positions 240 to 246 are excised as a propeptide; that stretch reads IVLNKIL.

This sequence belongs to the leguminous lectin family. Heterodimer of chain 1 and chain 2. Post-translationally, proteolytic processing yields active form.

In terms of biological role, lectin and alpha-amylase inhibitor. Acts as a defensive protein against insects. The sequence is that of Alpha-amylase inhibitor 1 (LLP) from Phaseolus vulgaris (Kidney bean).